Reading from the N-terminus, the 144-residue chain is Maximins 11/H11 (144 aa).

The signal sequence occupies residues 1–18 (MNFKYIVAVSFLIASAYA). The propeptide occupies 19–43 (RSEENDEQSLSQRDVLEEESLREIR). Asn70 carries the post-translational modification Asparagine amide. Positions 74-123 (TAEDHEVMKRLEAVMRDLDSLDYPEEASERETRGFNQEEIANLFTKKEKR) are excised as a propeptide. Position 143 is an isoleucine amide (Ile143).

This sequence belongs to the bombinin family. As to expression, expressed by the skin glands.

It is found in the secreted. Maximin-11 shows antimicrobial activity against bacteria and against the fungus C.albicans. It has little hemolytic activity. In terms of biological role, maximin-H11 shows antimicrobial activity against bacteria and against the fungus C.albicans. Shows strong hemolytic activity. In Bombina maxima (Giant fire-bellied toad), this protein is Maximins 11/H11.